The chain runs to 393 residues: 8-amino-7-oxononanoate synthase (393 aa).

108 to 109 (GF) provides a ligand contact to pyridoxal 5'-phosphate. His-133 lines the substrate pocket. Pyridoxal 5'-phosphate is bound by residues Ser-182, 207 to 210 (DDAH), and 238 to 241 (TLSK). An N6-(pyridoxal phosphate)lysine modification is found at Lys-241. A substrate-binding site is contributed by Thr-355.

The protein belongs to the class-II pyridoxal-phosphate-dependent aminotransferase family. BioF subfamily. In terms of assembly, homodimer. Pyridoxal 5'-phosphate serves as cofactor.

The catalysed reaction is 6-carboxyhexanoyl-[ACP] + L-alanine + H(+) = (8S)-8-amino-7-oxononanoate + holo-[ACP] + CO2. The protein operates within cofactor biosynthesis; biotin biosynthesis. Its function is as follows. Catalyzes the decarboxylative condensation of pimeloyl-[acyl-carrier protein] and L-alanine to produce 8-amino-7-oxononanoate (AON), [acyl-carrier protein], and carbon dioxide. The polypeptide is 8-amino-7-oxononanoate synthase (Petrotoga mobilis (strain DSM 10674 / SJ95)).